The sequence spans 245 residues: MTNLLPEMAEIWQQTLNWQPTDSQQARFQQLYELILEGNRQLNLTRITEPQEFWEKHLWDSLRGVAPQQQLISSLQLGASVIDIGTGAGFPGVPVAIIASNSTITLVDSTRKKITFIDTILSELALTNAKTLVSRAEEIGQQPQHREQYDVALIRAVGTASPCAEYTLPLLKLGGLAVIYRGTWTEEETTSVENAAQQLGGTVELIDNFTTPLTNSVRHCLYLRKVAKTPANFPRAVGVPSQKPI.

S-adenosyl-L-methionine contacts are provided by residues G85, F90, 108 to 110, 136 to 137, and R155; these read DST and AE.

It belongs to the methyltransferase superfamily. RNA methyltransferase RsmG family.

The protein localises to the cytoplasm. In terms of biological role, specifically methylates the N7 position of a guanine in 16S rRNA. This chain is Ribosomal RNA small subunit methyltransferase G, found in Nostoc sp. (strain PCC 7120 / SAG 25.82 / UTEX 2576).